We begin with the raw amino-acid sequence, 684 residues long: Pseudohemocyanin-1 (684 aa).

The signal sequence occupies residues 1-23 (SLVVAAAAASPYSGSHDFSGFQR). Residues 7–32 (AAASPYSGSHDFSGFQRDEPDGVPTA) are disordered. N-linked (GlcNAc...) asparagine glycans are attached at residues N100, N193, N230, and N626.

It belongs to the tyrosinase family. Hemocyanin subfamily. In terms of assembly, hexamer. As to expression, strongly expressed in ovaries. Also expressed in heart. Not detected in hepatopancreas, gills, connective tissue or muscle.

In terms of biological role, does not function as a hemocyanin. In Homarus americanus (American lobster), this protein is Pseudohemocyanin-1.